Consider the following 303-residue polypeptide: MWFKNLTLYRFNKPFTTDTETLENALADFTFSPCSSQDISKFGFSNALGKKGQALVHSAENRHLLCVTKEEKILPGQVIKEALDEKVAEIEELENRKVTKKEKDTIKDEITTTLLPRAFSRRSQTHALIMPELEMILVDSSSATKAEELLALLRKALGSLPVIPLSYATPIESTLTQWLQAGEAPAPFEMQDEAELKSDSDEGGIVRFKQQVLQEDEVLAHIATGKQVHKLALHFGQSIAFLMQSDASIKRLKFSEEFRAGNDEVGTEDPLARLDADFALMGSELVAFVNAVNQAFGPLEQSV.

Belongs to the RdgC family.

The protein resides in the cytoplasm. Its subcellular location is the nucleoid. In terms of biological role, may be involved in recombination. The polypeptide is Recombination-associated protein RdgC (Shewanella frigidimarina (strain NCIMB 400)).